We begin with the raw amino-acid sequence, 375 residues long: Platelet-derived growth factor receptor-like protein (375 aa).

The first 21 residues, 1–21 (MKVWLLLGLLLVHEALEDVTG), serve as a signal peptide directing secretion. The interval 22–64 (QHLPKNKRPKEPGENRIKPTNKKVKPKIPKMKDRDSANSAPKT) is disordered. Over residues 40 to 50 (PTNKKVKPKIP) the composition is skewed to basic residues. In terms of domain architecture, Ig-like C2-type 1 spans 62-159 (PKTQSIMMQV…GYICRKDEAK (98 aa)). C96 and C143 are joined by a disulfide. N-linked (GlcNAc...) asparagine glycosylation is found at N132 and N219. Positions 272-375 (PSTTILASSN…TTVATTVEFS (104 aa)) constitute an Ig-like C2-type 2 domain. A disulfide bond links C293 and C357.

Forms a complex composed of PDGFRL, TNK2 and GRB2. Expressed in colon, lung and liver.

It localises to the secreted. The sequence is that of Platelet-derived growth factor receptor-like protein (PDGFRL) from Homo sapiens (Human).